Reading from the N-terminus, the 207-residue chain is MAKTYDYLFKLLLIGDSGVGKTCLLFRFSEDAFNTTFISTIGIDFKIRTIELDGKKIKLQIWDTAGQERFRTITTAYYRGAMGIMLVYDITNEKSFDNIKNWIRNIEEHASSDVERMILGNKCDMNDKRQVSKERGEKLAIDYGIKFLETSAKSSTNVEEAFFTLARDIMTKLNRKMNDSNSSGAGGPVKITESRSKKTSFFRCSLL.

The GTP site is built by Ser17, Gly18, Val19, Gly20, Lys21, Thr22, Cys23, Thr35, Ser39, and Thr40. Thr22 contacts Mg(2+). Short sequence motifs (switch) lie at residues 31 to 45 (DAFN…GIDF) and 63 to 80 (DTAG…YYRG). Positions 40 and 63 each coordinate Mg(2+). GTP is bound at residue Gly66. Thr72 is subject to Phosphothreonine; by LRRK2. 5 residues coordinate GTP: Asn121, Lys122, Asp124, Ala152, and Lys153. Phosphoserine is present on residues Ser180 and Ser183. At Cys204 the chain carries Cysteine methyl ester. A lipid anchor (S-geranylgeranyl cysteine) is attached at Cys204. The propeptide at 205–207 (SLL) is removed in mature form.

Belongs to the small GTPase superfamily. Rab family. In terms of assembly, associated with actin, delta-catenin and alpha and beta tubulins. Interacts with OTOF. Interacts with PEX5R. Interacts with RAB3IP. Interacts with VIM. Interacts with CDH1. Interacts with MICALL2. Interacts with GDI1, GDI2, CHML and CHM; phosphorylation at Thr-72 disrupts these interactions. Interacts with MICAL1. Requires Mg(2+) as cofactor. In terms of processing, phosphorylation of Thr-72 in the switch II region by LRRK2 prevents the association of RAB regulatory proteins, including CHM, CHML and RAB GDP dissociation inhibitors GDI1 and GDI2.

The protein localises to the cell membrane. It localises to the cytoplasmic vesicle. Its subcellular location is the phagosome membrane. It is found in the endosome membrane. It catalyses the reaction GTP + H2O = GDP + phosphate + H(+). Regulated by guanine nucleotide exchange factors (GEFs) including RAB3IP/RABIN8 which promotes the exchange of bound GDP for free GTP. Regulated by GTPase activating proteins (GAPs) which increase the GTP hydrolysis activity. Inhibited by GDP dissociation inhibitors (GDIs). The small GTPases Rab are key regulators of intracellular membrane trafficking, from the formation of transport vesicles to their fusion with membranes. Rabs cycle between an inactive GDP-bound form and an active GTP-bound form that is able to recruit to membranes different sets of downstream effectors directly responsible for vesicle formation, movement, tethering and fusion. RAB8B may be involved in polarized vesicular trafficking and neurotransmitter release. May participate in cell junction dynamics in Sertoli cells. May also participate in the export of a subset of neosynthesized proteins through a Rab8-Rab10-Rab11-dependent endososomal export route. This is Ras-related protein Rab-8B from Mus musculus (Mouse).